A 202-amino-acid polypeptide reads, in one-letter code: ATP-dependent Clp protease proteolytic subunit (202 aa).

The active-site Nucleophile is Ser98. Residue His123 is part of the active site.

The protein belongs to the peptidase S14 family. Fourteen ClpP subunits assemble into 2 heptameric rings which stack back to back to give a disk-like structure with a central cavity, resembling the structure of eukaryotic proteasomes.

Its subcellular location is the cytoplasm. It carries out the reaction Hydrolysis of proteins to small peptides in the presence of ATP and magnesium. alpha-casein is the usual test substrate. In the absence of ATP, only oligopeptides shorter than five residues are hydrolyzed (such as succinyl-Leu-Tyr-|-NHMec, and Leu-Tyr-Leu-|-Tyr-Trp, in which cleavage of the -Tyr-|-Leu- and -Tyr-|-Trp bonds also occurs).. Cleaves peptides in various proteins in a process that requires ATP hydrolysis. Has a chymotrypsin-like activity. Plays a major role in the degradation of misfolded proteins. This chain is ATP-dependent Clp protease proteolytic subunit, found in Solidesulfovibrio magneticus (strain ATCC 700980 / DSM 13731 / RS-1) (Desulfovibrio magneticus).